Reading from the N-terminus, the 278-residue chain is Serine/threonine-protein phosphatase PGAM5, mitochondrial (278 aa).

Residues 7–27 (LIAGGSAAAAAAAILGAAAVG) traverse the membrane as a helical segment.

The protein belongs to the phosphoglycerate mutase family. BPG-dependent PGAM subfamily. Post-translationally, phosphorylated by the RIPK1/RIPK3 complex under necrotic conditions. This phosphorylation increases PGAM5 phosphatase activity.

Its subcellular location is the mitochondrion outer membrane. It carries out the reaction O-phospho-L-seryl-[protein] + H2O = L-seryl-[protein] + phosphate. The catalysed reaction is O-phospho-L-threonyl-[protein] + H2O = L-threonyl-[protein] + phosphate. Functionally, displays phosphatase activity for serine/threonine residues. Has apparently no phosphoglycerate mutase activity. May be regulator of mitochondrial dynamics. May be a central mediator for programmed necrosis. The protein is Serine/threonine-protein phosphatase PGAM5, mitochondrial (pgam5) of Xenopus tropicalis (Western clawed frog).